A 195-amino-acid polypeptide reads, in one-letter code: Cyclin-dependent kinase inhibitor 7 (195 aa).

A compositionally biased stretch (basic and acidic residues) spans 1–11; that stretch reads MSETKPKRDSE. 3 disordered regions span residues 1 to 50, 61 to 80, and 117 to 154; these read MSET…SVSD, EEEDDHLSSSISSGCSSSET, and SSENLGETAEMDSATTEMRDQRKTEKKKKMEKSPTQAE. 2 stretches are compositionally biased toward low complexity: residues 37–50 and 68–80; these read SSSSSSSLAYSVSD and SSSISSGCSSSET. Thr151 bears the Phosphothreonine; by KIN10 mark.

This sequence belongs to the CDI family. ICK/KRP subfamily. Specifically interacts with CDKA-1, but not with CDKB1-1. Interacts with CYCD4-1. Binds to FBL17. Ubiquitinated by SCF(FBL17). Ubiquitination leads to its subsequent degradation, thus controlling cell cycle progression. In terms of tissue distribution, expressed in flowers, in developing pollen, and at lower levels in roots and leaves.

Its subcellular location is the nucleus. It localises to the nucleoplasm. Binds and inhibits CYCD2-1/CDKA-1 complex kinase activity. May target specifically CDKA-1. This Arabidopsis thaliana (Mouse-ear cress) protein is Cyclin-dependent kinase inhibitor 7 (KRP7).